Consider the following 765-residue polypeptide: Leucine-rich repeat and calponin homology domain-containing protein 2 (765 aa).

Disordered stretches follow at residues 1–39 (MAAS…GGGG) and 55–76 (LFGQ…PQHT). LRR repeat units lie at residues 89-110 (SSGI…GYDL), 112-133 (DTTQ…VWLF), 135-156 (PLET…IKNL), 158-179 (MLTY…LFDL), 180-201 (PLKV…IGKL), 203-224 (DLME…MGKL), 226-248 (SLRE…GDLP), 249-269 (LVKL…YRKL), and 271-292 (HLQV…ICLK). The disordered stretch occupies residues 316–401 (LDLPSLSKRM…GSKTDSQKDQ (86 aa)). Positions 378–388 (SNREQTSRNDS) are enriched in basic and acidic residues. The stretch at 438-472 (SEKSRKNEELGDEKRLEKEQLLAEEEDDDLKEVTD) forms a coiled coil. Disordered regions lie at residues 498–552 (RNKP…QSEE) and 565–628 (KYKS…EYGA). The span at 503–512 (QTVECEKSVS) shows a compositional bias: basic and acidic residues. Composition is skewed to polar residues over residues 518–529 (SPLSPLTWQPLE) and 584–595 (DNANMSTQSPVS). The Calponin-homology (CH) domain maps to 642–755 (LREEREQIRQ…VTVQALLELP (114 aa)).

May play a role in the organization of the cytoskeleton. The chain is Leucine-rich repeat and calponin homology domain-containing protein 2 (LRCH2) from Homo sapiens (Human).